Here is a 656-residue protein sequence, read N- to C-terminus: UvrABC system protein C (656 aa).

Residues Thr-16–Val-95 enclose the GIY-YIG domain. The UVR domain occupies Gly-208 to Val-243.

Belongs to the UvrC family. Interacts with UvrB in an incision complex.

It localises to the cytoplasm. Functionally, the UvrABC repair system catalyzes the recognition and processing of DNA lesions. UvrC both incises the 5' and 3' sides of the lesion. The N-terminal half is responsible for the 3' incision and the C-terminal half is responsible for the 5' incision. The protein is UvrABC system protein C of Thermobifida fusca (strain YX).